The primary structure comprises 467 residues: Asparagine--tRNA ligase (467 aa).

Belongs to the class-II aminoacyl-tRNA synthetase family. As to quaternary structure, homodimer.

Its subcellular location is the cytoplasm. The enzyme catalyses tRNA(Asn) + L-asparagine + ATP = L-asparaginyl-tRNA(Asn) + AMP + diphosphate + H(+). This Legionella pneumophila (strain Paris) protein is Asparagine--tRNA ligase.